We begin with the raw amino-acid sequence, 207 residues long: Macrophage immunometabolism regulator (207 aa).

Position 1 is an N-acetylmethionine (methionine 1). Residues 1–41 (MEVDINGDSRSTLTTLPLPVAEGSSPGKAEAEKPRCSSTPC) form a disordered region. Residues serine 25 and serine 167 each carry the phosphoserine modification.

Belongs to the UNC119-binding protein family. In terms of assembly, interacts with UNC119 and UNC119B; interaction preferentially takes place when UNC119 and UNC119B are unliganded with myristoylated proteins. As to expression, highly expressed in photoreceptors.

Its subcellular location is the cytoplasm. The protein resides in the cell projection. The protein localises to the cilium. Its function is as follows. Regulates the macrophage function, by enhancing the resolution of inflammation and wound repair functions mediated by M2 macrophages. The regulation of macrophage function is, due at least in part, to its ability to inhibit glycolysis. May also play a role in trafficking of proteins via its interaction with UNC119 and UNC119B cargo adapters: may help the release of UNC119 and UNC119B cargo or the recycling of UNC119 and UNC119B. May play a role in ciliary membrane localization via its interaction with UNC119B and protein transport into photoreceptor cells. This Mus musculus (Mouse) protein is Macrophage immunometabolism regulator.